Reading from the N-terminus, the 70-residue chain is Large ribosomal subunit protein bL31 (70 aa).

Zn(2+)-binding residues include Cys16, Cys18, Cys37, and Cys40.

This sequence belongs to the bacterial ribosomal protein bL31 family. Type A subfamily. Part of the 50S ribosomal subunit. Requires Zn(2+) as cofactor.

Binds the 23S rRNA. The chain is Large ribosomal subunit protein bL31 from Glaesserella parasuis serovar 5 (strain SH0165) (Haemophilus parasuis).